The primary structure comprises 217 residues: ATP phosphoribosyltransferase (217 aa).

The protein belongs to the ATP phosphoribosyltransferase family. Short subfamily. As to quaternary structure, heteromultimer composed of HisG and HisZ subunits.

It is found in the cytoplasm. The catalysed reaction is 1-(5-phospho-beta-D-ribosyl)-ATP + diphosphate = 5-phospho-alpha-D-ribose 1-diphosphate + ATP. It functions in the pathway amino-acid biosynthesis; L-histidine biosynthesis; L-histidine from 5-phospho-alpha-D-ribose 1-diphosphate: step 1/9. Catalyzes the condensation of ATP and 5-phosphoribose 1-diphosphate to form N'-(5'-phosphoribosyl)-ATP (PR-ATP). Has a crucial role in the pathway because the rate of histidine biosynthesis seems to be controlled primarily by regulation of HisG enzymatic activity. This chain is ATP phosphoribosyltransferase, found in Burkholderia orbicola (strain MC0-3).